We begin with the raw amino-acid sequence, 146 residues long: Basic phospholipase A2 (146 aa).

Residues 1 to 21 (MNPAHLLVLAAVCVSLLGASS) form the signal peptide. A propeptide spanning residues 22–27 (VPPRPL) is cleaved from the precursor. 7 disulfides stabilise this stretch: cysteine 38–cysteine 97, cysteine 52–cysteine 145, cysteine 54–cysteine 70, cysteine 69–cysteine 127, cysteine 76–cysteine 120, cysteine 86–cysteine 113, and cysteine 106–cysteine 118. 3 residues coordinate Ca(2+): tyrosine 53, glycine 55, and glycine 57. Histidine 73 is an active-site residue. Aspartate 74 provides a ligand contact to Ca(2+). A glycan (N-linked (GlcNAc...) asparagine) is linked at asparagine 109. The active site involves aspartate 121.

The protein belongs to the phospholipase A2 family. Group I subfamily. D49 sub-subfamily. Ca(2+) is required as a cofactor. As to expression, expressed by the venom gland.

The protein localises to the secreted. It catalyses the reaction a 1,2-diacyl-sn-glycero-3-phosphocholine + H2O = a 1-acyl-sn-glycero-3-phosphocholine + a fatty acid + H(+). PLA2 catalyzes the calcium-dependent hydrolysis of the 2-acyl groups in 3-sn-phosphoglycerides. In Micrurus corallinus (Brazilian coral snake), this protein is Basic phospholipase A2.